A 370-amino-acid chain; its full sequence is Uroporphyrinogen decarboxylase (370 aa).

Residues 29 to 33, Asp79, Tyr155, Ser210, and His342 contribute to the substrate site; that span reads RQAGR.

The protein belongs to the uroporphyrinogen decarboxylase family. In terms of assembly, homodimer.

It localises to the cytoplasm. The enzyme catalyses uroporphyrinogen III + 4 H(+) = coproporphyrinogen III + 4 CO2. It functions in the pathway porphyrin-containing compound metabolism; protoporphyrin-IX biosynthesis; coproporphyrinogen-III from 5-aminolevulinate: step 4/4. Its function is as follows. Catalyzes the decarboxylation of four acetate groups of uroporphyrinogen-III to yield coproporphyrinogen-III. This is Uroporphyrinogen decarboxylase from Acidovorax sp. (strain JS42).